A 414-amino-acid chain; its full sequence is Transcriptional repressor protein YY1 (414 aa).

The interval 1–170 is interaction with the SMAD1/SMAD4 complex; the sequence is MASGDTLYIA…SGGGASSGGG (170 aa). Over residues 32–41 the composition is skewed to low complexity; it reads PVETIETTVV. Residues 32 to 83 form a disordered region; it reads PVETIETTVVGEEEEEDDDDEDGGGGDHGGGGGGHGHAGHHHHHHHHHHHHP. Positions 42–55 are enriched in acidic residues; it reads GEEEEEDDDDEDGG. Gly residues predominate over residues 57–67; the sequence is GDHGGGGGGHG. Over residues 68-83 the composition is skewed to basic residues; that stretch reads HAGHHHHHHHHHHHHP. A gly-rich region involved in interaction with HCFC1 region spans residues 118-260; sequence DDSDGLRAED…YSEYMTGKKL (143 aa). A Phosphoserine modification is found at Ser120. A disordered region spans residues 159 to 203; sequence GKSGGGASSGGGRVKKGGGKKSGKKSYLGGGAGAAGGGGADPGNK. Positions 160–170 are enriched in gly residues; sequence KSGGGASSGGG. Positions 171-182 are enriched in basic residues; it reads RVKKGGGKKSGK. Glycyl lysine isopeptide (Lys-Gly) (interchain with G-Cter in SUMO2) cross-links involve residues Lys182 and Lys183. Residues 186 to 199 are compositionally biased toward gly residues; the sequence is LGGGAGAAGGGGAD. Glycyl lysine isopeptide (Lys-Gly) (interchain with G-Cter in SUMO2) cross-links involve residues Lys208 and Lys230. At Ser247 the chain carries Phosphoserine. The segment at 257–341 is involved in nuclear matrix association; sequence GKKLPPGGIP…KAFVESSKLK (85 aa). Glycyl lysine isopeptide (Lys-Gly) (interchain with G-Cter in SUMO2) cross-links involve residues Lys286 and Lys288. Residues 295–414 form a binding to DNA region; sequence TIACPHKGCT…LTHAKAKNNQ (120 aa). 3 C2H2-type zinc fingers span residues 296-320, 325-347, and 353-377; these read IACP…LHTH, HVCA…QLVH, and FQCT…VRIH. Positions 298, 303, 316, 320, 327, 330, 343, 347, 355, 360, 373, and 377 each coordinate Zn(2+). The interval 333–371 is involved in repression of activated transcription; sequence AFVESSKLKRHQLVHTGEKPFQCTFEGCGKRFSLDFNLR. Residues 371–397 are involved in masking transactivation domain; sequence RTHVRIHTGDRPYVCPFDGCNKKFAQS. Position 378 is a phosphothreonine (Thr378). The segment at 383–407 adopts a C2H2-type 4 zinc-finger fold; sequence YVCPFDGCNKKFAQSTNLKSHILTH. Zn(2+) is bound by residues Cys385, Cys390, His403, and His407. Glycyl lysine isopeptide (Lys-Gly) (interchain with G-Cter in SUMO2) cross-links involve residues Lys409 and Lys411.

This sequence belongs to the YY transcription factor family. Interacts with YAF2 through the region encompassing the first and second zinc fingers. Component of the chromatin remodeling INO80 complex; specifically part of a complex module associated with the DBINO domain of INO80. Interacts with EED and EZH2; the interactions are indicative for an association with the PRC2/EED-EZH2 complex. Found in a complex with SMAD1 and SMAD4. Interacts with SFMBT2. Found in a complex with YY1, SIN3A and HDAC1. Accessory component of the polycomb repressive deubiquitinase (PR-DUB) complex, at least composed of BAP1, one of ASXL1, ASXL2 or (probably) ASXL3 and one of MBD5 or MBD6; the PR-DUB core associates with a number of accessory proteins, including FOXK1, FOXK2, KDM1B, HCFC1, YY1 and OGT. Interacts (via Gly-rich region) with HCFC1; the interaction is direct. Interacts (via C-terminal zinc-finger domains) with BAP1 (via ULD domain); the interaction is direct and requires HCFC1. Transiently poly-ADP-ribosylated by PARP1 upon DNA damage, with the effect of decreasing affinity of YY1 to its cognate DNA binding sites. Post-translationally, ubiquitinated. In terms of processing, phosphorylation at Ser-120 by CK2 prevents proteolytic cleavage by caspase-7 (CASP7) during apoptosis. Proteolytically cleaved by caspase-7 (CASP7) in response to apoptosis. Phosphorylation at Ser-120 protects against proteolytic cleavage. In terms of tissue distribution, expressed in ovary and, at lower levels, in testis.

Its subcellular location is the nucleus. It is found in the nucleus matrix. It localises to the cytoplasm. Multifunctional transcription factor that exhibits positive and negative control on a large number of cellular and viral genes by binding to sites overlapping the transcription start site. Binds to the consensus sequence 5'-CCGCCATNTT-3'; some genes have been shown to contain a longer binding motif allowing enhanced binding; the initial CG dinucleotide can be methylated greatly reducing the binding affinity. The effect on transcription regulation is depending upon the context in which it binds and diverse mechanisms of action include direct activation or repression, indirect activation or repression via cofactor recruitment, or activation or repression by disruption of binding sites or conformational DNA changes. Its activity is regulated by transcription factors and cytoplasmic proteins that have been shown to abrogate or completely inhibit YY1-mediated activation or repression. Binds to the upstream conserved region (UCR) (5'-CGCCATTTT-3') of Moloney murine leukemia virus (MuLV). Acts synergistically with the SMAD1 and SMAD4 in bone morphogenetic protein (BMP)-mediated cardiac-specific gene expression. Binds to SMAD binding elements (SBEs) (5'-GTCT/AGAC-3') within BMP response element (BMPRE) of cardiac activating regions. Proposed to recruit the PRC2/EED-EZH2 complex to target genes that are transcriptional repressed. Involved in DNA repair. In vitro, binds to DNA recombination intermediate structures (Holliday junctions). Involved in spermatogenesis and may play a role in meiotic DNA double-strand break repair. Plays a role in regulating enhancer activation. Recruits the PR-DUB complex to specific gene-regulatory regions. Functionally, proposed core component of the chromatin remodeling INO80 complex which is involved in transcriptional regulation, DNA replication and probably DNA repair; proposed to target the INO80 complex to YY1-responsive elements. The protein is Transcriptional repressor protein YY1 (Yy1) of Mus musculus (Mouse).